The chain runs to 215 residues: Methylthioribulose-1-phosphate dehydratase (215 aa).

Zn(2+)-binding residues include His-103 and His-105.

It belongs to the aldolase class II family. MtnB subfamily. Zn(2+) is required as a cofactor.

The catalysed reaction is 5-(methylsulfanyl)-D-ribulose 1-phosphate = 5-methylsulfanyl-2,3-dioxopentyl phosphate + H2O. It functions in the pathway amino-acid biosynthesis; L-methionine biosynthesis via salvage pathway; L-methionine from S-methyl-5-thio-alpha-D-ribose 1-phosphate: step 2/6. Catalyzes the dehydration of methylthioribulose-1-phosphate (MTRu-1-P) into 2,3-diketo-5-methylthiopentyl-1-phosphate (DK-MTP-1-P). The sequence is that of Methylthioribulose-1-phosphate dehydratase from Sulfurihydrogenibium sp. (strain YO3AOP1).